A 112-amino-acid chain; its full sequence is Peptidyl-prolyl cis-trans isomerase FKBP12 (112 aa).

Residues 1–22 are disordered; that stretch reads MGVEKQIIRAGTGPNPSRGQNV. The PPIase FKBP-type domain maps to 19–112; that stretch reads GQNVTVHCTG…EFEIEVLRAQ (94 aa). Cysteines 26 and 80 form a disulfide.

This sequence belongs to the FKBP-type PPIase family. In terms of assembly, interacts with FK506.

It is found in the cytoplasm. It carries out the reaction [protein]-peptidylproline (omega=180) = [protein]-peptidylproline (omega=0). Its function is as follows. PPIases accelerate the folding of proteins. It catalyzes the cis-trans isomerization of proline imidic peptide bonds in oligopeptides. The protein is Peptidyl-prolyl cis-trans isomerase FKBP12 (FKBP12) of Vicia faba (Broad bean).